The sequence spans 145 residues: Large ribosomal subunit protein uL11 (145 aa).

It belongs to the universal ribosomal protein uL11 family. Part of the ribosomal stalk of the 50S ribosomal subunit. Interacts with L10 and the large rRNA to form the base of the stalk. L10 forms an elongated spine to which L12 dimers bind in a sequential fashion forming a multimeric L10(L12)X complex. Post-translationally, one or more lysine residues are methylated.

Its function is as follows. Forms part of the ribosomal stalk which helps the ribosome interact with GTP-bound translation factors. The protein is Large ribosomal subunit protein uL11 of Rickettsia felis (strain ATCC VR-1525 / URRWXCal2) (Rickettsia azadi).